The primary structure comprises 445 residues: Methylenetetrahydrofolate--tRNA-(uracil-5-)-methyltransferase TrmFO (445 aa).

Residue 10–15 (GGGLSG) coordinates FAD.

The protein belongs to the MnmG family. TrmFO subfamily. FAD is required as a cofactor.

It localises to the cytoplasm. It carries out the reaction uridine(54) in tRNA + (6R)-5,10-methylene-5,6,7,8-tetrahydrofolate + NADH + H(+) = 5-methyluridine(54) in tRNA + (6S)-5,6,7,8-tetrahydrofolate + NAD(+). It catalyses the reaction uridine(54) in tRNA + (6R)-5,10-methylene-5,6,7,8-tetrahydrofolate + NADPH + H(+) = 5-methyluridine(54) in tRNA + (6S)-5,6,7,8-tetrahydrofolate + NADP(+). Its function is as follows. Catalyzes the folate-dependent formation of 5-methyl-uridine at position 54 (M-5-U54) in all tRNAs. In Lawsonia intracellularis (strain PHE/MN1-00), this protein is Methylenetetrahydrofolate--tRNA-(uracil-5-)-methyltransferase TrmFO.